The following is a 313-amino-acid chain: Olfactory receptor 1J4 (313 aa).

Over 1–25 the chain is Extracellular; the sequence is MKRENQSSVSEFLLLDLPIWPEQQA. Asn5 carries N-linked (GlcNAc...) asparagine glycosylation. A helical transmembrane segment spans residues 26-49; it reads VFFTLFLGMYLITVLGNLLIILLI. The Cytoplasmic segment spans residues 50–57; it reads RLDSHLHT. A helical membrane pass occupies residues 58-79; sequence PMFFFLSHLALTDISLSSVTVP. The Extracellular segment spans residues 80–100; that stretch reads KMLLSMQTQDQSILYAGCVTQ. Cysteines 97 and 189 form a disulfide. The helical transmembrane segment at 101 to 120 threads the bilayer; sequence MYFFIFFTDLDNFLLTSMAY. At 121-139 the chain is on the cytoplasmic side; it reads DRYVAICHPLRYTTIMKEG. The helical transmembrane segment at 140–158 threads the bilayer; that stretch reads LCNLLVTVSWILSCTNALS. The Extracellular segment spans residues 159–195; that stretch reads HTLLLAQLSFCADNTIPHFFCDLVALLKLSCSDISLN. The chain crosses the membrane as a helical span at residues 196–219; it reads ELVIFTVGQAVITLPLICILISYG. Residues 220-236 lie on the Cytoplasmic side of the membrane; that stretch reads HIGVTILKAPSTKGIFK. A helical membrane pass occupies residues 237 to 259; it reads ALSTCGSHLSVVSLYYGTIIGLY. Residues 260 to 272 are Extracellular-facing; sequence FLPSSSASSDKDV. The chain crosses the membrane as a helical span at residues 273 to 292; that stretch reads IASVMYTVITPLLNPFIYSL. Over 293 to 313 the chain is Cytoplasmic; sequence RNRDIKGALERLFNRATVLSQ.

This sequence belongs to the G-protein coupled receptor 1 family.

The protein localises to the cell membrane. Its function is as follows. Odorant receptor. This chain is Olfactory receptor 1J4 (OR1J4), found in Homo sapiens (Human).